Consider the following 137-residue polypeptide: MNILFGISDTQECYNAIKFAVKLAHSLKEVRFTLLHVSMEVFIYSESGMMDYGQTEALEEEKAKALLKQFEDAFKKENIECESVLKSGDLIDVVLDMAKDYDLLLIGASESNLLYRLFISHQNSLVEQSSIPVVIAK.

Belongs to the universal stress protein A family.

The chain is Universal stress protein HP_0031 from Helicobacter pylori (strain ATCC 700392 / 26695) (Campylobacter pylori).